The primary structure comprises 310 residues: UDP-N-acetylenolpyruvoylglucosamine reductase (310 aa).

The 178-residue stretch at 34–211 folds into the FAD-binding PCMH-type domain; it reads TGGPAQCVYV…REDMGKIAQE (178 aa). Residue R177 is part of the active site. S225 serves as the catalytic Proton donor. E295 is an active-site residue.

It belongs to the MurB family. It depends on FAD as a cofactor.

It localises to the cytoplasm. The catalysed reaction is UDP-N-acetyl-alpha-D-muramate + NADP(+) = UDP-N-acetyl-3-O-(1-carboxyvinyl)-alpha-D-glucosamine + NADPH + H(+). It functions in the pathway cell wall biogenesis; peptidoglycan biosynthesis. Its function is as follows. Cell wall formation. The sequence is that of UDP-N-acetylenolpyruvoylglucosamine reductase from Beijerinckia indica subsp. indica (strain ATCC 9039 / DSM 1715 / NCIMB 8712).